A 293-amino-acid chain; its full sequence is Porphobilinogen deaminase (293 aa).

The residue at position 235 (C235) is an S-(dipyrrolylmethanemethyl)cysteine.

Belongs to the HMBS family. As to quaternary structure, monomer. The cofactor is dipyrromethane.

It catalyses the reaction 4 porphobilinogen + H2O = hydroxymethylbilane + 4 NH4(+). Its pathway is porphyrin-containing compound metabolism; protoporphyrin-IX biosynthesis; coproporphyrinogen-III from 5-aminolevulinate: step 2/4. Its function is as follows. Tetrapolymerization of the monopyrrole PBG into the hydroxymethylbilane pre-uroporphyrinogen in several discrete steps. The sequence is that of Porphobilinogen deaminase from Ruminiclostridium cellulolyticum (strain ATCC 35319 / DSM 5812 / JCM 6584 / H10) (Clostridium cellulolyticum).